Reading from the N-terminus, the 505-residue chain is Catalase (505 aa).

The disordered stretch occupies residues 1-25 (MSKQDGKLTGLFGAPVSDRENSMTA). Active-site residues include His56 and Asn129. Tyr339 serves as a coordination point for heme.

Belongs to the catalase family. Homodimer. The cofactor is heme.

The catalysed reaction is 2 H2O2 = O2 + 2 H2O. Its function is as follows. Decomposes hydrogen peroxide into water and oxygen; serves to protect cells from the toxic effects of hydrogen peroxide. The sequence is that of Catalase (katA) from Staphylococcus warneri.